A 651-amino-acid chain; its full sequence is Beta-glucuronidase (651 aa).

A signal peptide spans 1 to 22 (MARGSAVAWAALGPLLWGCALG). 3 N-linked (GlcNAc...) asparagine glycosylation sites follow: Asn-173, Asn-272, and Asn-420. Residue Glu-451 is the Proton donor of the active site. A glycan (N-linked (GlcNAc...) asparagine) is linked at Asn-631.

It belongs to the glycosyl hydrolase 2 family. Homotetramer. In terms of processing, N-linked glycosylated with 3 to 4 oligosaccharide chains.

The protein resides in the lysosome. It catalyses the reaction a beta-D-glucuronoside + H2O = D-glucuronate + an alcohol. Its activity is regulated as follows. Inhibited by L-aspartic acid. Its function is as follows. Plays an important role in the degradation of dermatan and keratan sulfates. This is Beta-glucuronidase (GUSB) from Homo sapiens (Human).